A 275-amino-acid chain; its full sequence is Spermidine/putrescine transport system permease protein PotB (275 aa).

The helical transmembrane segment at 1–21 (MIVTIVGWLVLFVFLPNLMII) threads the bilayer. Topologically, residues 22–60 (GTSFLTRDDASFVKMVFTLDNYTRLLDPLYFEVLLHSLN) are periplasmic. The ABC transmembrane type-1 domain occupies 55 to 261 (LLHSLNMALI…IVMGLMLLVY (207 aa)). A helical transmembrane segment spans residues 61 to 81 (MALIATLACLVLGYPFAWFLA). Residues 82–89 (KLPHKVRP) are Cytoplasmic-facing. The chain crosses the membrane as a helical span at residues 90–110 (LLLFLLIVPFWTNSLIRIYGL). Residues 111–135 (KIFLSTKGYLNEFLLWLGVIDTPIR) are Periplasmic-facing. A helical transmembrane segment spans residues 136-156 (IMFTPSAVIIGLVYILLPFMV). Topologically, residues 157–187 (MPLYSSIEKLDKPLLEAARDLGASKLQTFIR) are cytoplasmic. Residues 188–208 (IIIPLTMPGIIAGCLLVMLPA) form a helical membrane-spanning segment. Residues 209-241 (MGLFYVSDLMGGAKNLLIGNVIKVQFLNIRDWP) are Periplasmic-facing. Residues 242-262 (FGAATSITLTIVMGLMLLVYW) traverse the membrane as a helical segment. At 263–275 (RASRLLNKKVELE) the chain is on the cytoplasmic side.

The protein belongs to the binding-protein-dependent transport system permease family. CysTW subfamily.

The protein resides in the cell inner membrane. Required for the activity of the bacterial periplasmic transport system of putrescine and spermidine. In Escherichia coli (strain K12), this protein is Spermidine/putrescine transport system permease protein PotB (potB).